Consider the following 1408-residue polypeptide: DNA-directed RNA polymerase subunit beta' (1408 aa).

Zn(2+)-binding residues include Cys-70, Cys-72, Cys-85, and Cys-88. Mg(2+)-binding residues include Asp-460, Asp-462, and Asp-464. The Zn(2+) site is built by Cys-814, Cys-888, Cys-895, and Cys-898.

It belongs to the RNA polymerase beta' chain family. In terms of assembly, the RNAP catalytic core consists of 2 alpha, 1 beta, 1 beta' and 1 omega subunit. When a sigma factor is associated with the core the holoenzyme is formed, which can initiate transcription. It depends on Mg(2+) as a cofactor. Requires Zn(2+) as cofactor.

It carries out the reaction RNA(n) + a ribonucleoside 5'-triphosphate = RNA(n+1) + diphosphate. Its function is as follows. DNA-dependent RNA polymerase catalyzes the transcription of DNA into RNA using the four ribonucleoside triphosphates as substrates. This chain is DNA-directed RNA polymerase subunit beta', found in Shewanella frigidimarina (strain NCIMB 400).